Reading from the N-terminus, the 436-residue chain is 3-ketoacyl-CoA thiolase (436 aa).

The Acyl-thioester intermediate role is filled by C99. Catalysis depends on proton acceptor residues H392 and C422.

The protein belongs to the thiolase-like superfamily. Thiolase family. As to quaternary structure, heterotetramer of two alpha chains (FadJ) and two beta chains (FadI).

The protein resides in the cytoplasm. It carries out the reaction an acyl-CoA + acetyl-CoA = a 3-oxoacyl-CoA + CoA. Its pathway is lipid metabolism; fatty acid beta-oxidation. Its function is as follows. Catalyzes the final step of fatty acid oxidation in which acetyl-CoA is released and the CoA ester of a fatty acid two carbons shorter is formed. The chain is 3-ketoacyl-CoA thiolase from Escherichia coli (strain 55989 / EAEC).